A 495-amino-acid polypeptide reads, in one-letter code: ATP-dependent RNA helicase dbp3 (495 aa).

The segment covering Met-1–His-14 has biased composition (basic and acidic residues). A disordered region spans residues Met-1–Pro-49. Residues Arg-15–Lys-27 are compositionally biased toward basic residues. Positions Ser-97–Gln-105 match the Q motif motif. A Helicase ATP-binding domain is found at Trp-109–Val-284. Ala-122–Thr-129 is a binding site for ATP. The short motif at Asp-231–Asp-234 is the DEAD box element. The region spanning Arg-315–Gly-464 is the Helicase C-terminal domain.

The protein belongs to the DEAD box helicase family. DDX5/DBP2 subfamily.

It localises to the nucleus. The protein resides in the nucleolus. The catalysed reaction is ATP + H2O = ADP + phosphate + H(+). Functionally, ATP-dependent RNA helicase required for 60S ribosomal subunit synthesis. Involved in efficient pre-rRNA processing, predominantly at site A3, which is necessary for the normal formation of 25S and 5.8S rRNAs. In Aspergillus niger (strain ATCC MYA-4892 / CBS 513.88 / FGSC A1513), this protein is ATP-dependent RNA helicase dbp3 (dbp3).